Consider the following 907-residue polypeptide: Phototropin-2 (907 aa).

Residues 28–84 (ATAGLEIVAEDAPSGSSGAHQQQAWRPVAPATAGRDSGGTGSGKSSVDGGVGRASHD) are disordered. Over residues 41–51 (SGSSGAHQQQA) the composition is skewed to polar residues. The PAS 1 domain maps to 89 to 162 (VSQELKDALS…AKIRDAVKHG (74 aa)). FMN is bound by residues 138–143 (NCRFLQ), Arg-156, Asn-171, Asn-181, and Gln-202. Cys-139 carries the post-translational modification S-4a-FMN cysteine. Positions 163 to 217 (RSFCGRLLNYRKDGAPFWNLLTVTPIRDDNGKVIKFIGMQVEVSKYTEGLSDKRM) constitute a PAC 1 domain. The tract at residues 332–363 (RSSVGSREAPAVVEEPAPAPPPAPEVVERTDS) is disordered. The 74-residue stretch at 375–448 (QGIDLATTLE…DKIREAIREQ (74 aa)) folds into the PAS 2 domain. FMN contacts are provided by residues 424–429 (NCRFLQ), Arg-442, Asn-457, Asn-467, and Gln-488. Residue Cys-425 is modified to S-4a-FMN cysteine. Residues 449-503 (KEITVQLINYTKSGKKFWNLFHLQPMRDQKGELQYFIGVQLDGSDHVEPLRNRLS) enclose the PAC 2 domain. The region spanning 576 to 863 (FKPVKPLGCG…ANDIKQHSFF (288 aa)) is the Protein kinase domain. ATP is bound by residues 582–590 (LGCGDTGSV) and Lys-605. The active-site Proton acceptor is Asp-701.

The protein belongs to the protein kinase superfamily. Ser/Thr protein kinase family. Homodimer. It depends on FMN as a cofactor. Autophosphorylated in response to blue light irradiation. Post-translationally, 2 molecules of FMN bind covalently to cysteines after exposure to blue light and are reversed in the dark. Expressed at low levels in leaves of dark-grown seedlings.

It carries out the reaction L-seryl-[protein] + ATP = O-phospho-L-seryl-[protein] + ADP + H(+). The catalysed reaction is L-threonyl-[protein] + ATP = O-phospho-L-threonyl-[protein] + ADP + H(+). Its function is as follows. Protein kinase that acts as a blue light photoreceptor in a signal-transduction pathway for phototropic responses. Regulates a wide range of physiological activities in plants that maximize the efficiency of photosynthesis, such as chloroplast relocations, stomata opening, and leaf expansion. In Oryza sativa subsp. japonica (Rice), this protein is Phototropin-2 (PHOT2).